The primary structure comprises 411 residues: Phosphoglycerate kinase (411 aa).

Substrate-binding positions include 19-21, Arg-34, 57-60, Arg-114, and Arg-154; these read DLN and HQSR. Residues Glu-332 and 358-361 contribute to the ATP site; that span reads GGHS.

It belongs to the phosphoglycerate kinase family. Monomer.

Its subcellular location is the cytoplasm. The enzyme catalyses (2R)-3-phosphoglycerate + ATP = (2R)-3-phospho-glyceroyl phosphate + ADP. It participates in carbohydrate degradation; glycolysis; pyruvate from D-glyceraldehyde 3-phosphate: step 2/5. In Thermococcus kodakarensis (strain ATCC BAA-918 / JCM 12380 / KOD1) (Pyrococcus kodakaraensis (strain KOD1)), this protein is Phosphoglycerate kinase.